The primary structure comprises 217 residues: MNQTLLSSFGTAFERVEHALDALREGRGVMVLDDEDRENEGDMIFAAETMTVEQMALTIRHGSGIVCLCLTEDRRKQLDLPMMVENNTSAYGTGFTVTIEAAEGVTTGVSAADRVTTVRAAIADGAKPSDLNRPGHVFPLRAQPGGVLTRGGHTEATIDLVTLAGFKPAGVLCELTNDDGTMARAPECIKFAQQHNMAIVTIEDLVAYRREHERKAS.

Residues 37–38, aspartate 42, 150–154, and glutamate 174 each bind D-ribulose 5-phosphate; these read RE and RGGHT. Glutamate 38 serves as a coordination point for Mg(2+). Position 153 (histidine 153) interacts with Mg(2+).

It belongs to the DHBP synthase family. In terms of assembly, homodimer. The cofactor is Mg(2+). It depends on Mn(2+) as a cofactor.

It carries out the reaction D-ribulose 5-phosphate = (2S)-2-hydroxy-3-oxobutyl phosphate + formate + H(+). The protein operates within cofactor biosynthesis; riboflavin biosynthesis; 2-hydroxy-3-oxobutyl phosphate from D-ribulose 5-phosphate: step 1/1. Functionally, catalyzes the conversion of D-ribulose 5-phosphate to formate and 3,4-dihydroxy-2-butanone 4-phosphate. The protein is 3,4-dihydroxy-2-butanone 4-phosphate synthase of Klebsiella pneumoniae (strain 342).